The sequence spans 291 residues: MNETVEALDPNEPRLITESGVAARIAAIVTPVLADLNLRLVRVKVTARDGGTCQIMAERPDGSMTIDDCEAASRAISPVLDVEDPITGAYRLEISSPGIDRPLVRLTDFDRWAGHEVKVEMAVPVDGRKRFRGILIGTRAELAVVKRTDAPKGEEPEVSLPVADIGEAKLVLTDALITEALRRAKAAERGLGEDEEFEDDADEVFEGDEADEKAAKDAANAERANAKKAADKAEKRAGKVARKAAKSEKAEKSQAKTGKARLSKAEVDDLAVTNPASRALRGGKPKAKETH.

The interval 188 to 291 is disordered; that stretch reads ERGLGEDEEF…GGKPKAKETH (104 aa). A compositionally biased stretch (acidic residues) spans 193–211; the sequence is EDEEFEDDADEVFEGDEAD. Composition is skewed to basic and acidic residues over residues 212–237 and 245–254; these read EKAAKDAANAERANAKKAADKAEKRA and AKSEKAEKSQ.

It belongs to the RimP family.

It is found in the cytoplasm. Its function is as follows. Required for maturation of 30S ribosomal subunits. The chain is Ribosome maturation factor RimP from Azorhizobium caulinodans (strain ATCC 43989 / DSM 5975 / JCM 20966 / LMG 6465 / NBRC 14845 / NCIMB 13405 / ORS 571).